Consider the following 447-residue polypeptide: Tubulin beta chain (447 aa).

GTP-binding residues include glutamine 11, glutamate 69, serine 138, glycine 142, threonine 143, glycine 144, asparagine 204, and asparagine 226. Glutamate 69 contributes to the Mg(2+) binding site. Positions 424-447 (QYQDAGVDEEEEEYEEEAPLEGEE) are disordered. A compositionally biased stretch (acidic residues) spans 429–447 (GVDEEEEEYEEEAPLEGEE).

Belongs to the tubulin family. In terms of assembly, dimer of alpha and beta chains. A typical microtubule is a hollow water-filled tube with an outer diameter of 25 nm and an inner diameter of 15 nM. Alpha-beta heterodimers associate head-to-tail to form protofilaments running lengthwise along the microtubule wall with the beta-tubulin subunit facing the microtubule plus end conferring a structural polarity. Microtubules usually have 13 protofilaments but different protofilament numbers can be found in some organisms and specialized cells. Mg(2+) is required as a cofactor.

It is found in the cytoplasm. Its subcellular location is the cytoskeleton. Functionally, tubulin is the major constituent of microtubules, a cylinder consisting of laterally associated linear protofilaments composed of alpha- and beta-tubulin heterodimers. Microtubules grow by the addition of GTP-tubulin dimers to the microtubule end, where a stabilizing cap forms. Below the cap, tubulin dimers are in GDP-bound state, owing to GTPase activity of alpha-tubulin. This Neurospora crassa (strain ATCC 24698 / 74-OR23-1A / CBS 708.71 / DSM 1257 / FGSC 987) protein is Tubulin beta chain (tub-2).